The sequence spans 372 residues: Bifunctional enzyme IspD/IspF (372 aa).

The segment at 1–210 is 2-C-methyl-D-erythritol 4-phosphate cytidylyltransferase; it reads MLDLSLIMLG…LNLNSPSNDI (210 aa). Residues 211–372 form a 2-C-methyl-D-erythritol 2,4-cyclodiphosphate synthase region; it reads FCGNGFDVHA…LKYFNWRNVL (162 aa). The a divalent metal cation site is built by D217 and H219. Residues 217-219 and 243-244 each bind 4-CDP-2-C-methyl-D-erythritol 2-phosphate; these read DVH and HS. Residue H251 participates in a divalent metal cation binding. Residues 265–267, 270–274, 341–344, F348, and R351 contribute to the 4-CDP-2-C-methyl-D-erythritol 2-phosphate site; these read DIG, YPDND, and TTTE.

In the N-terminal section; belongs to the IspD/TarI cytidylyltransferase family. IspD subfamily. It in the C-terminal section; belongs to the IspF family. The cofactor is a divalent metal cation.

It carries out the reaction 2-C-methyl-D-erythritol 4-phosphate + CTP + H(+) = 4-CDP-2-C-methyl-D-erythritol + diphosphate. It catalyses the reaction 4-CDP-2-C-methyl-D-erythritol 2-phosphate = 2-C-methyl-D-erythritol 2,4-cyclic diphosphate + CMP. The protein operates within isoprenoid biosynthesis; isopentenyl diphosphate biosynthesis via DXP pathway; isopentenyl diphosphate from 1-deoxy-D-xylulose 5-phosphate: step 2/6. It participates in isoprenoid biosynthesis; isopentenyl diphosphate biosynthesis via DXP pathway; isopentenyl diphosphate from 1-deoxy-D-xylulose 5-phosphate: step 4/6. Its function is as follows. Bifunctional enzyme that catalyzes the formation of 4-diphosphocytidyl-2-C-methyl-D-erythritol from CTP and 2-C-methyl-D-erythritol 4-phosphate (MEP) (IspD), and catalyzes the conversion of 4-diphosphocytidyl-2-C-methyl-D-erythritol 2-phosphate (CDP-ME2P) to 2-C-methyl-D-erythritol 2,4-cyclodiphosphate (ME-CPP) with a corresponding release of cytidine 5-monophosphate (CMP) (IspF). In Campylobacter fetus subsp. fetus (strain 82-40), this protein is Bifunctional enzyme IspD/IspF.